The primary structure comprises 261 residues: Enolase-phosphatase E1 (261 aa).

Residues Asp16 and Glu18 each contribute to the Mg(2+) site. Residues 153–154 (SS) and Lys187 each bind substrate. Mg(2+) is bound at residue Asp212.

It belongs to the HAD-like hydrolase superfamily. MasA/MtnC family. As to quaternary structure, monomer. It depends on Mg(2+) as a cofactor.

It localises to the cytoplasm. The protein resides in the nucleus. The catalysed reaction is 5-methylsulfanyl-2,3-dioxopentyl phosphate + H2O = 1,2-dihydroxy-5-(methylsulfanyl)pent-1-en-3-one + phosphate. Its pathway is amino-acid biosynthesis; L-methionine biosynthesis via salvage pathway; L-methionine from S-methyl-5-thio-alpha-D-ribose 1-phosphate: step 3/6. The protein operates within amino-acid biosynthesis; L-methionine biosynthesis via salvage pathway; L-methionine from S-methyl-5-thio-alpha-D-ribose 1-phosphate: step 4/6. Its function is as follows. Bifunctional enzyme that catalyzes the enolization of 2,3-diketo-5-methylthiopentyl-1-phosphate (DK-MTP-1-P) into the intermediate 2-hydroxy-3-keto-5-methylthiopentenyl-1-phosphate (HK-MTPenyl-1-P), which is then dephosphorylated to form the acireductone 1,2-dihydroxy-3-keto-5-methylthiopentene (DHK-MTPene). In Danio rerio (Zebrafish), this protein is Enolase-phosphatase E1 (enoph1).